We begin with the raw amino-acid sequence, 351 residues long: Phosphate acyltransferase (351 aa).

This sequence belongs to the PlsX family. Homodimer. Probably interacts with PlsY.

The protein resides in the cytoplasm. It catalyses the reaction a fatty acyl-[ACP] + phosphate = an acyl phosphate + holo-[ACP]. It functions in the pathway lipid metabolism; phospholipid metabolism. In terms of biological role, catalyzes the reversible formation of acyl-phosphate (acyl-PO(4)) from acyl-[acyl-carrier-protein] (acyl-ACP). This enzyme utilizes acyl-ACP as fatty acyl donor, but not acyl-CoA. The protein is Phosphate acyltransferase of Neisseria meningitidis serogroup A / serotype 4A (strain DSM 15465 / Z2491).